A 591-amino-acid polypeptide reads, in one-letter code: L-fucose isomerase (591 aa).

Active-site proton acceptor residues include E337 and D361. Positions 337, 361, and 528 each coordinate Mn(2+).

It belongs to the L-fucose isomerase family. In terms of assembly, homohexamer. The cofactor is Mn(2+).

It is found in the cytoplasm. The enzyme catalyses L-fucose = L-fuculose. Its pathway is carbohydrate degradation; L-fucose degradation; L-lactaldehyde and glycerone phosphate from L-fucose: step 1/3. In terms of biological role, converts the aldose L-fucose into the corresponding ketose L-fuculose. In Escherichia coli O139:H28 (strain E24377A / ETEC), this protein is L-fucose isomerase.